Here is a 153-residue protein sequence, read N- to C-terminus: 6,7-dimethyl-8-ribityllumazine synthase (153 aa).

5-amino-6-(D-ribitylamino)uracil is bound by residues F22, 56-58 (AFE), and 80-82 (TVI). Residue 85 to 86 (AT) coordinates (2S)-2-hydroxy-3-oxobutyl phosphate. Residue H88 is the Proton donor of the active site. F113 provides a ligand contact to 5-amino-6-(D-ribitylamino)uracil. Residue R127 participates in (2S)-2-hydroxy-3-oxobutyl phosphate binding.

This sequence belongs to the DMRL synthase family.

It carries out the reaction (2S)-2-hydroxy-3-oxobutyl phosphate + 5-amino-6-(D-ribitylamino)uracil = 6,7-dimethyl-8-(1-D-ribityl)lumazine + phosphate + 2 H2O + H(+). Its pathway is cofactor biosynthesis; riboflavin biosynthesis; riboflavin from 2-hydroxy-3-oxobutyl phosphate and 5-amino-6-(D-ribitylamino)uracil: step 1/2. Functionally, catalyzes the formation of 6,7-dimethyl-8-ribityllumazine by condensation of 5-amino-6-(D-ribitylamino)uracil with 3,4-dihydroxy-2-butanone 4-phosphate. This is the penultimate step in the biosynthesis of riboflavin. The chain is 6,7-dimethyl-8-ribityllumazine synthase from Clostridium perfringens (strain 13 / Type A).